The primary structure comprises 326 residues: N-acetyl-gamma-glutamyl-phosphate reductase (326 aa).

Cys-155 is an active-site residue.

Belongs to the NAGSA dehydrogenase family. Type 1 subfamily.

The protein resides in the cytoplasm. The catalysed reaction is N-acetyl-L-glutamate 5-semialdehyde + phosphate + NADP(+) = N-acetyl-L-glutamyl 5-phosphate + NADPH + H(+). Its pathway is amino-acid biosynthesis; L-arginine biosynthesis; N(2)-acetyl-L-ornithine from L-glutamate: step 3/4. Catalyzes the NADPH-dependent reduction of N-acetyl-5-glutamyl phosphate to yield N-acetyl-L-glutamate 5-semialdehyde. The protein is N-acetyl-gamma-glutamyl-phosphate reductase of Shewanella oneidensis (strain ATCC 700550 / JCM 31522 / CIP 106686 / LMG 19005 / NCIMB 14063 / MR-1).